Here is a 433-residue protein sequence, read N- to C-terminus: Alpha-(1,3)-fucosyltransferase fut-1 (433 aa).

The Cytoplasmic portion of the chain corresponds to 1–12; that stretch reads MTARSIKLFFAR. The helical; Signal-anchor for type II membrane protein transmembrane segment at 13-32 threads the bilayer; that stretch reads WKYLMFACCITYLLVIYAPI. Residues 33–433 lie on the Lumenal side of the membrane; that stretch reads SKSEQKDWKE…GTLVDSIPLD (401 aa). N-linked (GlcNAc...) asparagine glycosylation is found at Asn194 and Asn359.

It belongs to the glycosyltransferase 10 family. The cofactor is Mg(2+). It depends on Mn(2+) as a cofactor. Post-translationally, N-glycosylated. Glycosylation is important for enzymatic activity. As to expression, expressed in the pharyngeal-intestinal (PI) and anal valves. Expressed in ASG neurons and in one or two neurons in the retrovesicular ganglion and two neurons posterior to the PI valve and PHA and PHB neurons in the tail.

It is found in the golgi apparatus. The protein localises to the golgi stack membrane. It catalyses the reaction N(4)-{beta-D-GlcNAc-(1-&gt;2)-alpha-D-Man-(1-&gt;3)-[beta-D-GlcNAc-(1-&gt;2)-alpha-D-Man-(1-&gt;6)]-beta-D-Man-(1-&gt;4)-beta-D-GlcNAc-(1-&gt;4)-beta-D-GlcNAc}-L-asparaginyl-[protein] + GDP-beta-L-fucose = N(4)-{beta-D-GlcNAc-(1-&gt;2)-alpha-D-Man-(1-&gt;3)-[beta-D-GlcNAc-(1-&gt;2)-alpha-D-Man-(1-&gt;6)]-beta-D-Man-(1-&gt;4)-beta-D-GlcNAc-(1-&gt;4)-[alpha-L-Fuc(1-&gt;3)]-beta-D-GlcNAc}-L-asparaginyl-[protein] + GDP + H(+). The protein operates within protein modification; protein glycosylation. With respect to regulation, inhibited by Cu(2+) or Zn(2+) and to a lesser extent Ni(2+) ions. Preferentially catalyzes the addition of fucose in alpha 1-3 linkage to the first GlcNAc residue (with or without alpha 1,6-linked fucose), next to the peptide chains in N-glycans. Unlike in mammals, does not require the prior action of N-acetylglucosaminyltransferase I to generate complex N-glycans. The polypeptide is Alpha-(1,3)-fucosyltransferase fut-1 (Caenorhabditis elegans).